Consider the following 504-residue polypeptide: Putative pentatricopeptide repeat-containing protein At3g28640 (504 aa).

9 PPR repeats span residues 77–107, 115–149, 151–181, 182–216, 217–251, 253–287, 288–319, 320–350, and 356–390; these read NSFV…MVKE, SYLT…GVFL, DSHV…IPQP, DVVK…GLEP, DEFS…SWIE, DVFV…NVFS, WAAL…GIKP, DSVV…MEAR, and KHEH…PLAS. The tract at residues 391–470 is type E motif; sequence VWGALLNGCR…TPGWSVLEVD (80 aa). The type E(+) motif stretch occupies residues 471 to 501; sequence GNVTKFVSGDVSHPNLLQIHTVIHLLSVDAL.

This sequence belongs to the PPR family. PCMP-E subfamily.

This chain is Putative pentatricopeptide repeat-containing protein At3g28640 (PCMP-E79), found in Arabidopsis thaliana (Mouse-ear cress).